The following is a 265-amino-acid chain: MKNIHKIFSPEKKGKEKISVVTCYDFSFARILGETPIDSILVGDSLGMVFQGNSSTLPVTLEEMIYHTKVVRRGAPDKFIIADLPFLSYQTSIEEGIRSAGRMMKETDCDAVKIEGGSDFICELVAILKQIGIPVMGHLGLTPQSVHVFGGHRVQGKGEESSAKLLREAVALSESGAFSIVLEMIPAELGKRVSEEVGVLTIGIGAGPDCDGQVLVLNDLLGLDANFQPKFLKKFSNLHSIVKDAIESYHEEVRSGEFPGKDHSF.

Mg(2+) contacts are provided by aspartate 44 and aspartate 83. 3-methyl-2-oxobutanoate is bound by residues aspartate 44 to serine 45, aspartate 83, and lysine 113. Glutamate 115 is a Mg(2+) binding site. Glutamate 183 acts as the Proton acceptor in catalysis.

It belongs to the PanB family. In terms of assembly, homodecamer; pentamer of dimers. Mg(2+) is required as a cofactor.

Its subcellular location is the cytoplasm. It carries out the reaction 3-methyl-2-oxobutanoate + (6R)-5,10-methylene-5,6,7,8-tetrahydrofolate + H2O = 2-dehydropantoate + (6S)-5,6,7,8-tetrahydrofolate. Its pathway is cofactor biosynthesis; (R)-pantothenate biosynthesis; (R)-pantoate from 3-methyl-2-oxobutanoate: step 1/2. In terms of biological role, catalyzes the reversible reaction in which hydroxymethyl group from 5,10-methylenetetrahydrofolate is transferred onto alpha-ketoisovalerate to form ketopantoate. This Leptospira borgpetersenii serovar Hardjo-bovis (strain JB197) protein is 3-methyl-2-oxobutanoate hydroxymethyltransferase.